The chain runs to 219 residues: Uridylate kinase (219 aa).

9–10 is a binding site for ATP; that stretch reads GS. Gly41 lines the UMP pocket. Gly42 and Arg46 together coordinate ATP. Residues Asp63 and 110 to 116 each bind UMP; that span reads TFPGHTT. ATP-binding residues include Thr136, Asn137, Tyr142, and Asp145.

This sequence belongs to the UMP kinase family. As to quaternary structure, homohexamer.

It localises to the cytoplasm. It carries out the reaction UMP + ATP = UDP + ADP. It functions in the pathway pyrimidine metabolism; CTP biosynthesis via de novo pathway; UDP from UMP (UMPK route): step 1/1. Inhibited by UTP. Its function is as follows. Catalyzes the reversible phosphorylation of UMP to UDP. In Archaeoglobus fulgidus (strain ATCC 49558 / DSM 4304 / JCM 9628 / NBRC 100126 / VC-16), this protein is Uridylate kinase.